The chain runs to 199 residues: CASP-like protein 4B1 (199 aa).

The tract at residues 1–32 (MAMVASPDDIVKSPLPPPPPPPPPPLPPAHKD) is disordered. The Cytoplasmic portion of the chain corresponds to 1-53 (MAMVASPDDIVKSPLPPPPPPPPPPLPPAHKDKAAYNPYSGCPAHGGDDGLDG). Positions 14-28 (PLPPPPPPPPPPLPP) are enriched in pro residues. A helical membrane pass occupies residues 54–74 (IVLVLRAAAALLALVAMALVA). Residues 75 to 91 (SCRHGDWMEFTRYQEYR) are Extracellular-facing. The helical transmembrane segment at 92–112 (YLLGVAVVASLYSALQAARTF) threads the bilayer. Residues 113–127 (RRMRAGTAYAATFLD) lie on the Cytoplasmic side of the membrane. Residues 128-148 (FAGDQAVGYLLITASSAALPI) traverse the membrane as a helical segment. Residues 149-163 (TIRMRSAVVNTFTDV) lie on the Extracellular side of the membrane. Residues 164 to 184 (VAASISFAFLAFAALAFSALI) form a helical membrane-spanning segment. At 185 to 199 (AGFRLSSSSSSAYNY) the chain is on the cytoplasmic side.

The protein belongs to the Casparian strip membrane proteins (CASP) family. In terms of assembly, homodimer and heterodimers.

Its subcellular location is the cell membrane. In Oryza sativa subsp. japonica (Rice), this protein is CASP-like protein 4B1.